A 289-amino-acid polypeptide reads, in one-letter code: Probable aquaporin PIP2-6 (289 aa).

Met1 is subject to N-acetylmethionine. Topologically, residues 1-38 (MTKDELTEEESLSGKDYLDPPPVKTFEVRELKKWSFYR) are cytoplasmic. Thr7 is modified (phosphothreonine). Phosphoserine is present on Ser11. The helical transmembrane segment at 39–59 (AVIAEFIATLLFLYVTVLTVI) threads the bilayer. Topologically, residues 60 to 80 (GFKSQTDINAGGGACASVGLL) are extracellular. Residues 81–101 (GISWAFGGMIFILVYCTAGIS) traverse the membrane as a helical segment. Topologically, residues 102–124 (GGHINPAVTFGLFLASKVSLVRA) are cytoplasmic. Positions 106–108 (NPA) match the NPA 1 motif. The chain crosses the membrane as a helical span at residues 125-145 (VSYMVAQCLGATCGVGLVKVF). At 146–165 (QSTYYNRYGGGANMLSDGYN) the chain is on the extracellular side. The chain crosses the membrane as a helical span at residues 166-186 (VGVGVGAEIIGTFVLVYTVFS). Topologically, residues 187 to 200 (ATDPKRNARDSHIP) are cytoplasmic. The helical transmembrane segment at 201 to 221 (VLAPLPIGFSVFMVHLATIPI) threads the bilayer. Topologically, residues 222–248 (TGTGINPARSFGAAVIYNNQKAWDDQW) are extracellular. The NPA 2 signature appears at 227–229 (NPA). The helical transmembrane segment at 249–269 (IFWVGPFVGAAIAAFYHQFVL) threads the bilayer. The Cytoplasmic portion of the chain corresponds to 270-289 (RAGAMKAYGSVRSQLHELHA). Phosphoserine is present on residues Ser279 and Ser282.

This sequence belongs to the MIP/aquaporin (TC 1.A.8) family. PIP (TC 1.A.8.11) subfamily. In terms of tissue distribution, expressed above ground, and in flower buds.

The protein resides in the cell membrane. Aquaporins facilitate the transport of water and small neutral solutes across cell membranes. This chain is Probable aquaporin PIP2-6 (PIP2-6), found in Arabidopsis thaliana (Mouse-ear cress).